The following is a 301-amino-acid chain: UDP-N-acetylenolpyruvoylglucosamine reductase (301 aa).

Positions 30-194 (VGGEADYLVF…LSVKFALAPG (165 aa)) constitute an FAD-binding PCMH-type domain. Residue Arg173 is part of the active site. Catalysis depends on Ser223, which acts as the Proton donor. Residue Glu293 is part of the active site.

The protein belongs to the MurB family. It depends on FAD as a cofactor.

The protein resides in the cytoplasm. The enzyme catalyses UDP-N-acetyl-alpha-D-muramate + NADP(+) = UDP-N-acetyl-3-O-(1-carboxyvinyl)-alpha-D-glucosamine + NADPH + H(+). The protein operates within cell wall biogenesis; peptidoglycan biosynthesis. Cell wall formation. This Streptococcus pneumoniae (strain Hungary19A-6) protein is UDP-N-acetylenolpyruvoylglucosamine reductase.